The sequence spans 223 residues: Deoxyribose-phosphate aldolase (223 aa).

The active-site Proton donor/acceptor is the Asp92. The Schiff-base intermediate with acetaldehyde role is filled by Lys158. Lys188 functions as the Proton donor/acceptor in the catalytic mechanism.

It belongs to the DeoC/FbaB aldolase family. DeoC type 1 subfamily.

The protein localises to the cytoplasm. It carries out the reaction 2-deoxy-D-ribose 5-phosphate = D-glyceraldehyde 3-phosphate + acetaldehyde. It participates in carbohydrate degradation; 2-deoxy-D-ribose 1-phosphate degradation; D-glyceraldehyde 3-phosphate and acetaldehyde from 2-deoxy-alpha-D-ribose 1-phosphate: step 2/2. Catalyzes a reversible aldol reaction between acetaldehyde and D-glyceraldehyde 3-phosphate to generate 2-deoxy-D-ribose 5-phosphate. In Mycolicibacterium paratuberculosis (strain ATCC BAA-968 / K-10) (Mycobacterium paratuberculosis), this protein is Deoxyribose-phosphate aldolase.